We begin with the raw amino-acid sequence, 134 residues long: MDRDFGIFSFLAVSVSAAGFFFGGFQYSFLILLSLMAIEFISTTLKETIIHKLSFKKVFARLVKKLVTLALISVCHFFDQLLNTQGSIRDLAIMFYILYESVQIVVTASSLGIPVPQMLVDLLETLKNKFKRKP.

3 consecutive transmembrane segments (helical) span residues 5–25, 30–50, and 62–82; these read FGIFSFLAVSVSAAGFFFGGF, LILLSLMAIEFISTTLKETII, and LVKKLVTLALISVCHFFDQLL.

The protein belongs to the bacteriophage holin family. Cp-1 holin subfamily.

Its subcellular location is the cell membrane. This is an uncharacterized protein from Bacillus subtilis (strain 168).